A 302-amino-acid chain; its full sequence is uncharacterized protein (302 aa).

Residues N32, N39, and N94 are each glycosylated (N-linked (GlcNAc...) asparagine). The region spanning 80 to 115 (CRDTDMNCAVWVATNTSDCENVELVNSHCPRTCQTC) is the ShKT domain. Intrachain disulfides connect C80–C115, C87–C108, and C98–C112. N181 carries an N-linked (GlcNAc...) asparagine glycan.

This is an uncharacterized protein from Caenorhabditis elegans.